A 567-amino-acid chain; its full sequence is Urease subunit alpha (567 aa).

A Urease domain is found at 129-567; that stretch reads GGIDTHIHWI…LPMAQRYFLF (439 aa). Ni(2+) contacts are provided by H134, H136, and K217. K217 is subject to N6-carboxylysine. A substrate-binding site is contributed by H219. Positions 246 and 272 each coordinate Ni(2+). Residue H320 is the Proton donor of the active site. D360 lines the Ni(2+) pocket.

This sequence belongs to the metallo-dependent hydrolases superfamily. Urease alpha subunit family. In terms of assembly, heterotrimer of UreA (gamma), UreB (beta) and UreC (alpha) subunits. Three heterotrimers associate to form the active enzyme. The cofactor is Ni cation. Post-translationally, carboxylation allows a single lysine to coordinate two nickel ions.

The protein resides in the cytoplasm. It catalyses the reaction urea + 2 H2O + H(+) = hydrogencarbonate + 2 NH4(+). The protein operates within nitrogen metabolism; urea degradation; CO(2) and NH(3) from urea (urease route): step 1/1. The sequence is that of Urease subunit alpha from Klebsiella pneumoniae (strain 342).